The primary structure comprises 396 residues: MGALDDLRVLDLTQVLAGPYCTMLLADMGADVVKVERPGGDLIRSNPPFVSDGDEEAYGGYFQSVNRGKRSLELNLGTDEDREAFLSLVERADVVVENFKAGTMEKFDCGYETLREHNPDLIYSSIRGFGDPRTGETHRQGQPSFDLIAQALGGVMEITGQSDGPPTKVGPGVGDLFTAVLNAVGILAAVHHRERTGEGQYVDTAMYDSMVSLCERTVYQYSCDGESPTRQGNSHPTLFPYDSFEAADGHVVIAAFADGHWEALCEAMERPDLAAEYPDAGSRIANRESLRAEIAEWTTAIDSETLLDLLEGRVPAAPVQNTADIFDDPHIHDREMLAEVDQPGADDQMTIAGSPIKMTETMPSPGGRAPLLDEHKTELLDEAGVDTGTNRVESDD.

Aspartate 175 (nucleophile) is an active-site residue.

The protein belongs to the CoA-transferase III family.

The enzyme catalyses mesaconate + succinyl-CoA = 2-methylfumaryl-CoA + succinate. Functionally, involved in the methylaspartate cycle. Catalyzes the transfer of the CoA moiety from succinyl-CoA to mesaconate to generate mesaconyl-CoA (2-methylfumaryl-CoA) and succinate. This chain is Succinyl-CoA:mesaconate CoA-transferase, found in Haloarcula marismortui (strain ATCC 43049 / DSM 3752 / JCM 8966 / VKM B-1809) (Halobacterium marismortui).